Here is a 198-residue protein sequence, read N- to C-terminus: Nucleoid occlusion factor SlmA (198 aa).

Residues 10 to 70 (NRREEILQSL…SLIEFIEDSL (61 aa)) enclose the HTH tetR-type domain. Positions 33–52 (TTAKLAASVGVSEAALYRHF) form a DNA-binding region, H-T-H motif. Positions 117–145 (EQDRLQGRINQLFERIEAQLRQVMREKKM) form a coiled coil.

Belongs to the nucleoid occlusion factor SlmA family. In terms of assembly, homodimer. Interacts with FtsZ.

The protein resides in the cytoplasm. It is found in the nucleoid. In terms of biological role, required for nucleoid occlusion (NO) phenomenon, which prevents Z-ring formation and cell division over the nucleoid. Acts as a DNA-associated cell division inhibitor that binds simultaneously chromosomal DNA and FtsZ, and disrupts the assembly of FtsZ polymers. SlmA-DNA-binding sequences (SBS) are dispersed on non-Ter regions of the chromosome, preventing FtsZ polymerization at these regions. This is Nucleoid occlusion factor SlmA from Klebsiella pneumoniae subsp. pneumoniae (strain ATCC 700721 / MGH 78578).